The primary structure comprises 673 residues: Polygalacturonate 4-alpha-galacturonosyltransferase (673 aa).

Topologically, residues 1-22 are cytoplasmic; that stretch reads MALKRGLSGVNRIRGSGGGSRS. A helical; Signal-anchor for type II membrane protein membrane pass occupies residues 23-43; the sequence is VLVLLIFFCVFAPLCFFVGRG. Topologically, residues 44–673 are lumenal; the sequence is VYIDSSNDYS…PYLRRCNLHE (630 aa). A glycan (N-linked (GlcNAc...) asparagine) is linked at N103. A disordered region spans residues 112-136; it reads GVDPSFRHSENPATPDVKSNNLNEK. N-linked (GlcNAc...) asparagine glycans are attached at residues N382, N434, N538, and N585.

Belongs to the glycosyltransferase 8 family. In terms of tissue distribution, expressed in seedlings, inflorescences, flowers, siliques, pollen, roots, stems and leaves.

The protein resides in the golgi apparatus membrane. It catalyses the reaction [(1-&gt;4)-alpha-D-galacturonosyl](n) + UDP-alpha-D-galacturonate = [(1-&gt;4)-alpha-D-galacturonosyl](n+1) + UDP + H(+). The protein operates within glycan metabolism; pectin biosynthesis. Its function is as follows. Involved in pectin biosynthesis. Catalyzes the transfer of galacturonic acid from uridine 5'-diphosphogalacturonic acid onto the pectic polysaccharide homogalacturonan. The chain is Polygalacturonate 4-alpha-galacturonosyltransferase (GAUT1) from Arabidopsis thaliana (Mouse-ear cress).